A 242-amino-acid chain; its full sequence is Type III pantothenate kinase (242 aa).

Residue 6-13 coordinates ATP; the sequence is DAGNTRIK. Residues Tyr90 and 97–100 each bind substrate; that span reads GADR. Catalysis depends on Asp99, which acts as the Proton acceptor. Thr122 is a binding site for ATP. Thr172 is a substrate binding site.

Belongs to the type III pantothenate kinase family. In terms of assembly, homodimer. It depends on NH4(+) as a cofactor. K(+) is required as a cofactor.

It localises to the cytoplasm. The enzyme catalyses (R)-pantothenate + ATP = (R)-4'-phosphopantothenate + ADP + H(+). Its pathway is cofactor biosynthesis; coenzyme A biosynthesis; CoA from (R)-pantothenate: step 1/5. Functionally, catalyzes the phosphorylation of pantothenate (Pan), the first step in CoA biosynthesis. In Aromatoleum aromaticum (strain DSM 19018 / LMG 30748 / EbN1) (Azoarcus sp. (strain EbN1)), this protein is Type III pantothenate kinase.